A 303-amino-acid chain; its full sequence is Methionyl-tRNA formyltransferase (303 aa).

111-114 (SLLP) provides a ligand contact to (6S)-5,6,7,8-tetrahydrofolate.

Belongs to the Fmt family.

The enzyme catalyses L-methionyl-tRNA(fMet) + (6R)-10-formyltetrahydrofolate = N-formyl-L-methionyl-tRNA(fMet) + (6S)-5,6,7,8-tetrahydrofolate + H(+). Its function is as follows. Attaches a formyl group to the free amino group of methionyl-tRNA(fMet). The formyl group appears to play a dual role in the initiator identity of N-formylmethionyl-tRNA by promoting its recognition by IF2 and preventing the misappropriation of this tRNA by the elongation apparatus. The sequence is that of Methionyl-tRNA formyltransferase from Ehrlichia canis (strain Jake).